Consider the following 636-residue polypeptide: Protein meg-1 (636 aa).

3 stretches are compositionally biased toward polar residues: residues 1–13, 38–54, and 292–355; these read MDNRGHFSSNGNF, SSGNMRSIGGSAQNQQQ, and LSMN…QYNH. 4 disordered regions span residues 1–54, 289–367, 484–504, and 521–542; these read MDNR…NQQQ, LFNL…APHL, SDVAREDASTSQPSKSRSMYI, and LDSSQSHAGPVPAASTKPKTPS. Serine 574 bears the Phosphoserine; by mbk-2 mark. Residues 591–636 form a disordered region; it reads MSQSFLHQQDDEAPDCTKNVHSESDLKQAEPQESDKQSDKELPSNE. A compositionally biased stretch (basic and acidic residues) spans 608–636; the sequence is KNVHSESDLKQAEPQESDKQSDKELPSNE.

In terms of assembly, interacts with pptr-1, pptr-2 and pgl-1. Phosphorylated by mbk-2, which promotes the disassembly of zygotic P granules in the anterior cytoplasm of pre-gastrulation embryos. Dephosphorylated by a phosphatase complex containing the PP2A regulatory subunit pptr-1, which promotes the assembly and accumulation of zygotic P granules in the posterior cytoplasm of pre-gastrulation embryos. Not expressed in the adult germline or in any somatic tissues.

The protein localises to the cytoplasmic granule. Its function is as follows. P granule component, which acts redundantly with P granule component meg-2 to promote P granule segregation during embryogenesis, and germ cell proliferation and differentiation in larval stages. In its phosphorylated form, and together with meg-2, promotes the disassembly of zygotic P granules in the anterior cytoplasm of pre-gastrulation embryos. In its dephosphorylated form, and together with meg-2, promotes the assembly and accumulation of zygotic P granules in the posterior cytoplasm of pre-gastrulation embryos. May function with the nanos family members nos-2 and nos-3 to promote germ cell proliferation during larval development. Required for fertility. This Caenorhabditis elegans protein is Protein meg-1.